We begin with the raw amino-acid sequence, 52 residues long: Disintegrin multisquamatin (52 aa).

Residues 1–50 (EGEECESGPCCRNCKFLKEGTICKRARGDDMDDYCNGKTCDCPRNPHKGP) form the Disintegrin domain. Intrachain disulfides connect cysteine 5–cysteine 14, cysteine 10–cysteine 35, cysteine 11–cysteine 40, and cysteine 23–cysteine 42. The Cell attachment site motif lies at 27–29 (RGD).

This sequence belongs to the venom metalloproteinase (M12B) family. P-II subfamily. P-IIa sub-subfamily. As to quaternary structure, monomer. As to expression, expressed by the venom gland.

It localises to the secreted. Inhibits ADP-induced human, canine and rabbit platelet aggregation by binding with high affinity to alpha-IIb/beta-3 (ITGA2B/ITGB3). The chain is Disintegrin multisquamatin from Echis multisquamatus (Central Asian sand viper).